Reading from the N-terminus, the 289-residue chain is 4-hydroxybenzoate octaprenyltransferase (289 aa).

9 consecutive transmembrane segments (helical) span residues 22–42, 45–65, 96–116, 118–138, 140–160, 164–184, 211–231, 236–256, and 267–287; these read AGWL…SHGF, WHLV…GCCI, LGLG…TNAV, IAWS…KRYV, MPQA…FAAV, VPPL…AYDT, VAGV…ALIQ, AIFM…GWLI, and AFRL…LSYW.

It belongs to the UbiA prenyltransferase family. Mg(2+) is required as a cofactor.

It localises to the cell inner membrane. It catalyses the reaction all-trans-octaprenyl diphosphate + 4-hydroxybenzoate = 4-hydroxy-3-(all-trans-octaprenyl)benzoate + diphosphate. Its pathway is cofactor biosynthesis; ubiquinone biosynthesis. Catalyzes the prenylation of para-hydroxybenzoate (PHB) with an all-trans polyprenyl group. Mediates the second step in the final reaction sequence of ubiquinone-8 (UQ-8) biosynthesis, which is the condensation of the polyisoprenoid side chain with PHB, generating the first membrane-bound Q intermediate 3-octaprenyl-4-hydroxybenzoate. This is 4-hydroxybenzoate octaprenyltransferase from Polaromonas naphthalenivorans (strain CJ2).